Reading from the N-terminus, the 146-residue chain is Hemoglobin subunit beta (146 aa).

At Val-1 the chain carries N-acetylvaline. In terms of domain architecture, Globin spans 2–146 (HLTDAEKAAV…VATALAHKYH (145 aa)). Ser-44 carries the phosphoserine modification. Lys-59 carries the N6-acetyllysine modification. His-63 contributes to the heme b binding site. Lys-82 carries the post-translational modification N6-acetyllysine. His-92 contacts heme b. Cys-93 bears the S-nitrosocysteine mark. Residue Lys-144 is modified to N6-acetyllysine.

It belongs to the globin family. Heterotetramer of two alpha chains and two beta chains. Red blood cells.

Involved in oxygen transport from the lung to the various peripheral tissues. This chain is Hemoglobin subunit beta (HBB), found in Spalax ehrenbergi (Middle East blind mole rat).